The primary structure comprises 351 residues: Protein Wnt-4 (351 aa).

Residues 1–22 (MSPEYFLRSLLLIILATFSANA) form the signal peptide. 2 N-linked (GlcNAc...) asparagine glycosylation sites follow: N21 and N88. 11 disulfide bridges follow: C78/C89, C128/C136, C138/C155, C206/C220, C208/C215, C280/C311, C296/C306, C310/C350, C326/C341, C328/C338, and C333/C334. S212 carries O-palmitoleoyl serine; by PORCN lipidation. Residue N297 is glycosylated (N-linked (GlcNAc...) asparagine).

Belongs to the Wnt family. Interacts with CPZ. In terms of processing, palmitoleoylation is required for efficient binding to frizzled receptors. Depalmitoleoylation leads to Wnt signaling pathway inhibition. As to expression, predominantly expressed in the diencephalon neuromere D2.

Its subcellular location is the secreted. It localises to the extracellular space. The protein resides in the extracellular matrix. In terms of biological role, ligand for members of the frizzled family of seven transmembrane receptors. Plays an important role in embryonic development. This Gallus gallus (Chicken) protein is Protein Wnt-4 (WNT4).